Here is an 894-residue protein sequence, read N- to C-terminus: Microsomal triglyceride transfer protein large subunit (894 aa).

Positions 1–21 (MILLAVLFLCFFSSYSASVKG) are cleaved as a signal peptide. Residues 28 to 658 (LNNERLYKLT…IFQYIGKAEL (631 aa)) enclose the Vitellogenin domain. Cys174 and Cys194 form a disulfide bridge.

As to quaternary structure, interacts with PRAP1. In terms of assembly, heterodimer; heterodimerizes with the protein disulfide isomerase (P4HB/PDI). Interacts with APOB. Heterodimer; heterodimerizes with the protein disulfide isomerase (P4HB/PDI). Post-translationally, cleaved by signal peptidase between residues Gln-33 and Asn-34. As to expression, mainly expressed in the intestine and the liver, and at lower levels in white and brown fat cells. Expressed in heart. Ubiquitous, and is the major isoform in hematopoietic cells and adipocytes.

It is found in the endoplasmic reticulum. Its subcellular location is the golgi apparatus. It catalyses the reaction a 1,2-diacyl-sn-glycero-3-phosphocholine(in) = a 1,2-diacyl-sn-glycero-3-phosphocholine(out). The enzyme catalyses a 1,2-diacyl-sn-glycero-3-phosphoethanolamine(in) = a 1,2-diacyl-sn-glycero-3-phosphoethanolamine(out). The catalysed reaction is a cholesterol ester(in) = a cholesterol ester(out). It carries out the reaction a triacyl-sn-glycerol(in) = a triacyl-sn-glycerol(out). Its function is as follows. Catalyzes the transport of triglyceride, cholesteryl ester, and phospholipid between phospholipid surfaces. Required for the assembly and secretion of plasma lipoproteins that contain apolipoprotein B. May be involved in regulating cholesteryl ester biosynthesis in cells that produce lipoproteins. Functionally, critical for the development of natural killer T (NKT) cells. Required for the assembly and secretion of plasma lipoproteins that contain apolipoprotein B. The polypeptide is Microsomal triglyceride transfer protein large subunit (Mttp) (Mus musculus (Mouse)).